The sequence spans 70 residues: Large ribosomal subunit protein eL38 (70 aa).

Belongs to the eukaryotic ribosomal protein eL38 family.

The chain is Large ribosomal subunit protein eL38 (RPL38) from Artemia franciscana (Brine shrimp).